We begin with the raw amino-acid sequence, 257 residues long: Diphthine synthase (257 aa).

Residues L9, D83, M86, 111-112, and I163 each bind S-adenosyl-L-methionine; that span reads SI.

The protein belongs to the diphthine synthase family. As to quaternary structure, homodimer.

The enzyme catalyses 2-[(3S)-amino-3-carboxypropyl]-L-histidyl-[translation elongation factor 2] + 3 S-adenosyl-L-methionine = diphthine-[translation elongation factor 2] + 3 S-adenosyl-L-homocysteine + 3 H(+). It participates in protein modification; peptidyl-diphthamide biosynthesis. Its function is as follows. S-adenosyl-L-methionine-dependent methyltransferase that catalyzes the trimethylation of the amino group of the modified target histidine residue in translation elongation factor 2 (EF-2), to form an intermediate called diphthine. The three successive methylation reactions represent the second step of diphthamide biosynthesis. In Thermoplasma acidophilum (strain ATCC 25905 / DSM 1728 / JCM 9062 / NBRC 15155 / AMRC-C165), this protein is Diphthine synthase.